Reading from the N-terminus, the 313-residue chain is Hydroxyphenylpyruvate reductase (313 aa).

Residues 152-155 (LGRI), 174-176 (SRS), and I230 each bind NADP(+). Residue R232 is part of the active site. D256 lines the NADP(+) pocket. The active site involves E261. H279 serves as the catalytic Proton donor.

Belongs to the D-isomer specific 2-hydroxyacid dehydrogenase family.

It carries out the reaction (2R)-2-hydroxy-3-(4-hydroxyphenyl)propanoate + NAD(+) = 3-(4-hydroxyphenyl)pyruvate + NADH + H(+). The catalysed reaction is (2R)-2-hydroxy-3-(4-hydroxyphenyl)propanoate + NADP(+) = 3-(4-hydroxyphenyl)pyruvate + NADPH + H(+). The enzyme catalyses (2R)-3-(3,4-dihydroxyphenyl)lactate + NADP(+) = 3-(3,4-dihydroxyphenyl)pyruvate + NADPH + H(+). It catalyses the reaction (2R)-3-(3,4-dihydroxyphenyl)lactate + NAD(+) = 3-(3,4-dihydroxyphenyl)pyruvate + NADH + H(+). Its function is as follows. Catalyzes the NAD(P)H-dependent reduction of 4-hydroxyphenylpyruvate to 4-hydroxyphenyllactate and 3,4-dihydroxyphenylpyruvate to 3,4-dihydroxyphenyllactate in the biosynthesis of rosmarinic acid. Rosmarinic acid is an ester of caffeic acid and 3,4-dihydroxyphenyllactic acid. NADP is the preferred substrate. The chain is Hydroxyphenylpyruvate reductase (HPPR) from Plectranthus scutellarioides (Coleus).